The chain runs to 218 residues: Cell division protein SepF (218 aa).

The disordered stretch occupies residues 24–115; it reads EDVTASTDNV…IANRREQYQQ (92 aa). A compositionally biased stretch (polar residues) spans 28–43; it reads ASTDNVIPRSQQSVRA. Residues 47–63 are compositionally biased toward basic and acidic residues; the sequence is PKQEPRNNHVQQDHQAR.

It belongs to the SepF family. Homodimer. Interacts with FtsZ.

The protein localises to the cytoplasm. Functionally, cell division protein that is part of the divisome complex and is recruited early to the Z-ring. Probably stimulates Z-ring formation, perhaps through the cross-linking of FtsZ protofilaments. Its function overlaps with FtsA. The sequence is that of Cell division protein SepF from Streptococcus pyogenes serotype M4 (strain MGAS10750).